A 416-amino-acid chain; its full sequence is N-acetylmuramoyl-L-alanine amidase AmiC (416 aa).

An N-terminal signal peptide occupies residues 1 to 26; sequence MIKLTRRQIIRRTAGTLFALSPIASA. Residues 166–191 form a disordered region; the sequence is RGSPEADLAQNTTPQPGRGRNGRRPV. The 214-residue stretch at 192–405 folds into the MurNAc-LAA domain; the sequence is IMLDPGHGGE…CAQSIASGVQ (214 aa).

It belongs to the N-acetylmuramoyl-L-alanine amidase 3 family.

It localises to the periplasm. The enzyme catalyses Hydrolyzes the link between N-acetylmuramoyl residues and L-amino acid residues in certain cell-wall glycopeptides.. Functionally, cell-wall hydrolase involved in septum cleavage during cell division. This Neisseria meningitidis serogroup B (strain ATCC BAA-335 / MC58) protein is N-acetylmuramoyl-L-alanine amidase AmiC (amiC).